A 141-amino-acid chain; its full sequence is Large ribosomal subunit protein uL11 (141 aa).

Belongs to the universal ribosomal protein uL11 family. Part of the ribosomal stalk of the 50S ribosomal subunit. Interacts with L10 and the large rRNA to form the base of the stalk. L10 forms an elongated spine to which L12 dimers bind in a sequential fashion forming a multimeric L10(L12)X complex. In terms of processing, one or more lysine residues are methylated.

Functionally, forms part of the ribosomal stalk which helps the ribosome interact with GTP-bound translation factors. The sequence is that of Large ribosomal subunit protein uL11 from Prochlorococcus marinus (strain MIT 9313).